The following is a 207-amino-acid chain: Small ribosomal subunit protein uS4 (207 aa).

A disordered region spans residues 31–55 (KCKLDSKPGQHGRTSGARTSDYGTQ). A compositionally biased stretch (polar residues) spans 42–53 (GRTSGARTSDYG). Residues 97–160 (SRLDNVVYRM…KKQARILEAL (64 aa)) enclose the S4 RNA-binding domain.

It belongs to the universal ribosomal protein uS4 family. As to quaternary structure, part of the 30S ribosomal subunit. Contacts protein S5. The interaction surface between S4 and S5 is involved in control of translational fidelity.

In terms of biological role, one of the primary rRNA binding proteins, it binds directly to 16S rRNA where it nucleates assembly of the body of the 30S subunit. Its function is as follows. With S5 and S12 plays an important role in translational accuracy. The chain is Small ribosomal subunit protein uS4 from Paraburkholderia phymatum (strain DSM 17167 / CIP 108236 / LMG 21445 / STM815) (Burkholderia phymatum).